Reading from the N-terminus, the 209-residue chain is MTLASQIASDLLDIKAVYLKPEEPFTWASGIKSPIYTDNRITLSYPETRTLIENGFVKKIKEEFPEVEVIAGTATAGIPHGAIIADKMNLPFAYIRSKPKDHGAGNQIEGRVVKGEKMVVVEDLISTGGSVLDAVAAAEREGADVIGVVAIFTYELPKAEKNFAEAGVKLVTLSNYTELIKVAKVKGYITADGLRLLKKFKENQETWQD.

Residues Arg-96, Lys-100, His-102, and 122–130 (EDLISTGGS) each bind 5-phospho-alpha-D-ribose 1-diphosphate. Ser-126 is a binding site for orotate.

This sequence belongs to the purine/pyrimidine phosphoribosyltransferase family. PyrE subfamily. In terms of assembly, homodimer. Mg(2+) is required as a cofactor.

It catalyses the reaction orotidine 5'-phosphate + diphosphate = orotate + 5-phospho-alpha-D-ribose 1-diphosphate. The protein operates within pyrimidine metabolism; UMP biosynthesis via de novo pathway; UMP from orotate: step 1/2. In terms of biological role, catalyzes the transfer of a ribosyl phosphate group from 5-phosphoribose 1-diphosphate to orotate, leading to the formation of orotidine monophosphate (OMP). The polypeptide is Orotate phosphoribosyltransferase (Streptococcus thermophilus (strain CNRZ 1066)).